The chain runs to 852 residues: DNA repair protein rhp54 (852 aa).

Short sequence motifs (nuclear localization signal) lie at residues 35-51 (KKFK…RKEL) and 178-181 (KRKK). A compositionally biased stretch (basic and acidic residues) spans 187–205 (NRKGKKEISDSEPESDHDS). Residues 187–208 (NRKGKKEISDSEPESDHDSCVS) form a disordered region. The Helicase ATP-binding domain maps to 281-459 (GRIDRCANGC…FSLLNFANPG (179 aa)). 294–301 (DEMGLGKT) serves as a coordination point for ATP. The DEGH box motif lies at 410 to 413 (DEGH). The Helicase C-terminal domain occupies 614–767 (VLERMLYQIK…CVVDEAQDVE (154 aa)).

Belongs to the SNF2/RAD54 helicase family. In terms of assembly, homohexamer. Interacts with rhp51.

Its subcellular location is the nucleus. It catalyses the reaction ATP + H2O = ADP + phosphate + H(+). Plays an essential role in homologous recombination (HR) which is a major pathway for repairing DNA double-strand breaks (DSBs), single-stranded DNA (ssDNA) gaps, and stalled or collapsed replication forks. Acts as a molecular motor during the homology search and guides RAD51 ssDNA along a donor dsDNA thereby changing the homology search from the diffusion-based mechanism to a motor-guided mechanism. Plays also an essential role in RAD51-mediated synaptic complex formation which consists of three strands encased in a protein filament formed once homology is recognized. Once DNA strand exchange occured, dissociates RAD51 from nucleoprotein filaments formed on dsDNA. This Schizosaccharomyces pombe (strain 972 / ATCC 24843) (Fission yeast) protein is DNA repair protein rhp54 (rhp54).